The following is a 443-amino-acid chain: Transcriptional regulatory protein ZraR (443 aa).

A Response regulatory domain is found at 7-121; that stretch reads DILVVDDDIS…KLQLTLSEAL (115 aa). 4-aspartylphosphate is present on D56. The 230-residue stretch at 141–370 folds into the Sigma-54 factor interaction domain; that stretch reads MVGDSPAMRA…LENAVERAVV (230 aa). ATP is bound by residues G172, T173, R329, and R359. The H-T-H motif DNA-binding region spans 423 to 442; the sequence is KTEAARRLGITRKTLLAKLS.

In terms of processing, phosphorylated by ZraS.

It localises to the cytoplasm. Its activity is regulated as follows. Activity of the ZraS/ZraR two-component system is repressed by the zinc-bound form of ZraP, which probably interacts with the periplasmic region of ZraS. Part of the Zra signaling pathway, an envelope stress response (ESR) system composed of the periplasmic accessory protein ZraP, the histidine kinase ZraS and the transcriptional regulator ZraR. The ZraPSR system contributes to antibiotic resistance and is important for membrane integrity in the presence of membrane-targeting biocides. ZraR is a member of the two-component regulatory system ZraS/ZraR. When activated by ZraS, acts in conjunction with sigma-54 to regulate the expression of zraP in the presence of high Zn(2+) or Pb(2+) concentrations. Also positively autoregulates the expression of the zraSR operon. The polypeptide is Transcriptional regulatory protein ZraR (zraR) (Klebsiella oxytoca).